Reading from the N-terminus, the 130-residue chain is Small ribosomal subunit protein uS9 (130 aa).

The protein belongs to the universal ribosomal protein uS9 family.

The chain is Small ribosomal subunit protein uS9 from Mycoplasmoides gallisepticum (strain R(low / passage 15 / clone 2)) (Mycoplasma gallisepticum).